The sequence spans 209 residues: Pyridoxal phosphate homeostasis protein (209 aa).

Lysine 31 carries the post-translational modification N6-(pyridoxal phosphate)lysine.

Belongs to the pyridoxal phosphate-binding protein YggS/PROSC family.

In terms of biological role, pyridoxal 5'-phosphate (PLP)-binding protein, which is involved in PLP homeostasis. The protein is Pyridoxal phosphate homeostasis protein of Deinococcus radiodurans (strain ATCC 13939 / DSM 20539 / JCM 16871 / CCUG 27074 / LMG 4051 / NBRC 15346 / NCIMB 9279 / VKM B-1422 / R1).